Reading from the N-terminus, the 198-residue chain is Glycerol-3-phosphate acyltransferase (198 aa).

The next 5 membrane-spanning stretches (helical) occupy residues leucine 4–isoleucine 24, serine 53–phenylalanine 75, proline 80–phenylalanine 102, leucine 112–valine 132, and valine 134–phenylalanine 154.

The protein belongs to the PlsY family. Probably interacts with PlsX.

The protein localises to the cell inner membrane. The enzyme catalyses an acyl phosphate + sn-glycerol 3-phosphate = a 1-acyl-sn-glycero-3-phosphate + phosphate. It functions in the pathway lipid metabolism; phospholipid metabolism. In terms of biological role, catalyzes the transfer of an acyl group from acyl-phosphate (acyl-PO(4)) to glycerol-3-phosphate (G3P) to form lysophosphatidic acid (LPA). This enzyme utilizes acyl-phosphate as fatty acyl donor, but not acyl-CoA or acyl-ACP. The protein is Glycerol-3-phosphate acyltransferase of Aliivibrio fischeri (strain ATCC 700601 / ES114) (Vibrio fischeri).